The following is a 162-amino-acid chain: Peroxiredoxin-2C (162 aa).

Positions 4–162 (ITVGDVVPDG…SSAEDILKAL (159 aa)) constitute a Thioredoxin domain. Residue Cys51 is the Cysteine sulfenic acid (-SOH) intermediate of the active site.

It belongs to the peroxiredoxin family. Prx5 subfamily. As to quaternary structure, monomer. Highly expressed in buds and flowers. Slightly expressed in green tissues. Also detected in pollen.

The protein localises to the cytoplasm. The catalysed reaction is [glutaredoxin]-dithiol + a hydroperoxide = [glutaredoxin]-disulfide + an alcohol + H2O. Functionally, thiol-specific peroxidase that catalyzes the reduction of hydrogen peroxide and organic hydroperoxides to water and alcohols, respectively. Plays a role in cell protection against oxidative stress by detoxifying peroxides and as sensor of hydrogen peroxide-mediated signaling events. This chain is Peroxiredoxin-2C (PRXIIC), found in Arabidopsis thaliana (Mouse-ear cress).